A 235-amino-acid chain; its full sequence is uncharacterized protein (235 aa).

3 consecutive transmembrane segments (helical) span residues 41 to 61 (IFWH…IYRL), 71 to 91 (LRTF…IEFP), and 129 to 149 (IGII…TPTI).

Its subcellular location is the membrane. This is an uncharacterized protein from Schizosaccharomyces pombe (strain 972 / ATCC 24843) (Fission yeast).